The following is a 913-amino-acid chain: Pentatricopeptide repeat-containing protein At1g10270 (913 aa).

A disordered region spans residues Ser-34–Thr-138. Positions Asp-64–Asn-73 are enriched in polar residues. Pro residues predominate over residues His-74–Pro-84. The short motif at Glu-99 to Arg-108 is the Nuclear localization signal element. Residues Arg-108 to Asn-130 are compositionally biased toward basic and acidic residues. The tract at residues Leu-134 to Leu-167 is leucine-zipper. PPR repeat units follow at residues Thr-179–Pro-214, Asn-215–Pro-250, Ser-251–Ala-285, Asp-286–Lys-316, Asp-321–Met-355, His-356–Pro-390, Asn-396–Lys-426, Asp-435–Ala-469, Asp-470–Val-504, Val-505–Pro-539, and Asp-540–Val-574. Residues Arg-607–Asn-913 are disordered. A compositionally biased stretch (polar residues) spans Trp-639 to Ser-649. Low complexity-rich tracts occupy residues Gly-650 to Ala-666 and Ser-673 to Thr-690. Residues Trp-674 to Thr-858 form a 14 X 11 AA approximate tandem repeats of W-x(2)-Q-x(4)-Q-x(2) region. The span at Ala-691–Arg-700 shows a compositional bias: polar residues. The span at Gln-706–Trp-727 shows a compositional bias: low complexity. Positions Thr-728–Ala-761 are enriched in polar residues. The segment covering Asn-762–Gln-791 has biased composition (low complexity). The span at Pro-792–Pro-814 shows a compositional bias: polar residues. Residues Trp-815 to Gln-845 show a composition bias toward low complexity. Polar residues-rich tracts occupy residues Ser-846 to Leu-867 and Ala-875 to Pro-894. Residues Glu-899–Asn-913 show a composition bias toward basic and acidic residues.

Belongs to the PPR family. P subfamily. Interacts with RPB36B through its WQQ domain. Ubiquitous but preferentially expressed in gametophytes and young embryos.

Its subcellular location is the nucleus. Its function is as follows. May function as a transcriptional regulator essential for early embryogenesis. The protein is Pentatricopeptide repeat-containing protein At1g10270 (GRP23) of Arabidopsis thaliana (Mouse-ear cress).